Here is a 765-residue protein sequence, read N- to C-terminus: Zinc transporter ZIP6 (765 aa).

The N-terminal stretch at 1–20 (MATDLSVIMILTFALWVTSP) is a signal peptide. The Extracellular portion of the chain corresponds to 21-335 (LHELQSTAAF…PKTYSLQIAW (315 aa)). A glycan (N-linked (GlcNAc...) asparagine) is linked at Asn68. 2 stretches are compositionally biased toward basic and acidic residues: residues 96–135 (DHEH…DHEH) and 174–186 (RPAE…RNIK). 2 disordered regions span residues 96–196 (DHEH…EVTS) and 209–257 (VETI…SEPR). A compositionally biased stretch (low complexity) spans 187 to 196 (ESASSSEVTS). The segment covering 224 to 233 (VNPSTPPSIT) has biased composition (polar residues). A compositionally biased stretch (basic residues) spans 238 to 247 (VGRLSRLARK). Positions 248-257 (KSNESVSEPR) are enriched in basic and acidic residues. Residues Asn250, Asn275, and Asn292 are each glycosylated (N-linked (GlcNAc...) asparagine). Residues 336–356 (LGGFIAISIISFLSLLGVILV) form a helical membrane-spanning segment. Over 357–365 (PLMNRVFFK) the chain is Cytoplasmic. The helical transmembrane segment at 366 to 386 (FLLSFLVALAVGTLSGDALLH) threads the bilayer. The Extracellular segment spans residues 387-433 (LLPHSHASHQHSHSHEEPAMEMKRGPLFSHLSAQNIEESSYFDSTWK). The helical transmembrane segment at 434–454 (GLTALGGLYFMFLVEHVLTLI) threads the bilayer. Topologically, residues 455–667 (KQFKDKKKKN…LKAGMTVKQA (213 aa)) are cytoplasmic. The interval 458–519 (KDKKKKNQKK…EPSPFDSQQP (62 aa)) is disordered. Positions 475 to 495 (ESKKQLSKYDSQLSSNEEKVD) form a coiled coil. Ser481 and Ser488 each carry phosphoserine. A compositionally biased stretch (basic and acidic residues) spans 490–508 (NEEKVDPGERPESYLRADS). Polar residues predominate over residues 509–519 (QEPSPFDSQQP). The helical transmembrane segment at 668 to 688 (VLYNALSAMLAYLGMATGIFI) threads the bilayer. Over 689–696 (GHYAENVS) the chain is Extracellular. Asn694 carries N-linked (GlcNAc...) asparagine glycosylation. The helical transmembrane segment at 697-717 (MWIFALTAGLFMYVALVDMVP) threads the bilayer. Topologically, residues 718–734 (EMLHNDASDHGCSRWGY) are cytoplasmic. Residues 735-755 (FFLQNAGILLGFGIMLLISIF) form a helical membrane-spanning segment. The Extracellular segment spans residues 756–765 (EHKIVFRINF).

The protein belongs to the ZIP transporter (TC 2.A.5) family. Interacts with SLC39A10; which triggers cells to undergo EMT and mitosis. Found in a complex with SLC39A6, SLC39A10 and with the 'Ser-727' phosphorylated form of STAT3 throughout mitosis. Found in a complex with SLC39A6, SLC39A10 and with NCAM1; this complex controls NCAM1 phosphorylation and integration into focal adhesion complexes during epithelial-to-mesenchymal transition (EMT). Found in a complex with SLC39A6, SLC39A10 and with GSK3B that controls NCAM1 phosphorylation. Cleaved on the N-terminus before locating to the plasma membrane. In terms of processing, N-glycosylated. Post-translationally, phosphorylated by ZAP70 in response to TCR stimulation leading to its activation. As to expression, highly expressed in the brain and testis. In the brain strongly expressed in the CA1 and CA3 regions, Purkinje cells in cerebellum and dentate gyrus in hippocampus. In testis found in spermatids or mature sperms in the central areas of seminiferous tubules.

It is found in the cell membrane. The protein localises to the cell projection. Its subcellular location is the lamellipodium membrane. It localises to the membrane raft. The protein resides in the apical cell membrane. The enzyme catalyses Zn(2+)(in) = Zn(2+)(out). Zinc-influx transporter which plays a role in zinc homeostasis and in the induction of epithelial-to-mesenchymal transition (EMT). When associated with SLC39A10, the heterodimer formed by SLC39A10 and SLC39A6 mediates cellular zinc uptake to trigger cells to undergo epithelial- to-mesenchymal transition (EMT). The SLC39A10-SLC39A6 heterodimer also controls NCAM1 phosphorylation and its integration into focal adhesion complexes during EMT. Zinc influx inactivates GSK3B, enabling unphosphorylated SNAI1 in the nucleus to down-regulate adherence genes such as E-cadherin, causing loss of cell adherence. In addition, the SLC39A10-SLC39A6 heterodimer plays an essentiel role in initiating mitosis by importing zinc into cells to initiate a pathway resulting in the onset of mitosis. Participates in the T-cell receptor signaling regulation by mediating cellular zinc uptake into activated lymphocytes. Regulates the zinc influx necessary for proper meiotic progression to metaphase II (MII) that allows the oocyte-to-egg transition. The chain is Zinc transporter ZIP6 from Mus musculus (Mouse).